A 442-amino-acid chain; its full sequence is Vitellogenin-2 (442 aa).

Residues 1 to 19 (MNPLRTLCVMACLLAVAMG) form the signal peptide. The span at 21 to 33 (PQSGNRSGRRSNS) shows a compositional bias: low complexity. Positions 21 to 44 (PQSGNRSGRRSNSLDNVEQPSNWV) are disordered. Residues Ser31 and Ser33 each carry the phosphoserine modification. A compositionally biased stretch (polar residues) spans 34–44 (LDNVEQPSNWV). At Ser82 the chain carries Phosphoserine. 2 disordered regions span residues 165–200 (QPYETTDYSNEEQSQRSSSEEQQTQRRKQNGEQDDT) and 408–442 (KSPFGRSTPAQKQTGYHQVHQPWRQSSSNQGSRRQ). Thr170 carries the post-translational modification Phosphothreonine. Tyr172 is subject to Sulfotyrosine. Ser173, Ser178, Ser181, Ser182, and Ser183 each carry phosphoserine. Low complexity-rich tracts occupy residues 175–186 (EEQSQRSSSEEQ) and 431–442 (RQSSSNQGSRRQ).

This sequence belongs to the AB hydrolase superfamily. Lipase family. In terms of processing, tyrosine sulfation occurs in the female only and plays an essential functional role. In terms of tissue distribution, synthesized in the fat body and ovarian follicle cells and accumulate in the oocyte.

The protein localises to the secreted. Its function is as follows. Vitellogenin is the major yolk protein of eggs where it is used as a food source during embryogenesis. Vitellogenins and their receptor yl/yolkless are required for maintenance of microtubule plus-end orientation towards the posterior pole of oocytes. Involved in polarized localization of germ plasm components, such as osk mRNA and vas protein, to the oocyte posterior cortex. Receptor-mediated endocytosis by yl/yolkless is crucial for actin reorganization, mediated by osk isoform A/Long, required to anchor germ plasm components to the oocyte cortex. The chain is Vitellogenin-2 (Yp2) from Drosophila melanogaster (Fruit fly).